Here is a 415-residue protein sequence, read N- to C-terminus: Esterase FrsA (415 aa).

It belongs to the FrsA family.

The catalysed reaction is a carboxylic ester + H2O = an alcohol + a carboxylate + H(+). Its function is as follows. Catalyzes the hydrolysis of esters. This chain is Esterase FrsA, found in Serratia proteamaculans (strain 568).